The following is a 61-amino-acid chain: Small ribosomal subunit protein uS14 (61 aa).

Zn(2+)-binding residues include cysteine 24, cysteine 27, cysteine 40, and cysteine 43.

It belongs to the universal ribosomal protein uS14 family. Zinc-binding uS14 subfamily. As to quaternary structure, part of the 30S ribosomal subunit. Contacts proteins S3 and S10. Zn(2+) serves as cofactor.

In terms of biological role, binds 16S rRNA, required for the assembly of 30S particles and may also be responsible for determining the conformation of the 16S rRNA at the A site. This Leptospira borgpetersenii serovar Hardjo-bovis (strain JB197) protein is Small ribosomal subunit protein uS14.